Consider the following 485-residue polypeptide: NADH-quinone oxidoreductase subunit N (485 aa).

The next 14 membrane-spanning stretches (helical) occupy residues 8 to 28 (LIAL…MLSI), 35 to 55 (FLNA…LWFV), 71 to 91 (GFAM…CTFA), 105 to 125 (FYLL…ANHL), 127 to 147 (ALFL…GYAF), 159 to 179 (YTIL…LVYA), 203 to 223 (LLAG…LVPF), 235 to 255 (PAPV…GVVM), 271 to 291 (VVLG…ALSQ), 297 to 317 (LLGY…IALQ), 326 to 346 (VGVY…VVSL), 373 to 393 (AAVM…LGFI), 408 to 430 (WWLV…RVAV), and 455 to 475 (IVVL…QPLI).

Belongs to the complex I subunit 2 family. NDH-1 is composed of 13 different subunits. Subunits NuoA, H, J, K, L, M, N constitute the membrane sector of the complex.

The protein localises to the cell inner membrane. It catalyses the reaction a quinone + NADH + 5 H(+)(in) = a quinol + NAD(+) + 4 H(+)(out). Functionally, NDH-1 shuttles electrons from NADH, via FMN and iron-sulfur (Fe-S) centers, to quinones in the respiratory chain. The immediate electron acceptor for the enzyme in this species is believed to be ubiquinone. Couples the redox reaction to proton translocation (for every two electrons transferred, four hydrogen ions are translocated across the cytoplasmic membrane), and thus conserves the redox energy in a proton gradient. In Salmonella typhimurium (strain LT2 / SGSC1412 / ATCC 700720), this protein is NADH-quinone oxidoreductase subunit N.